The sequence spans 331 residues: Photosystem II assembly lipoprotein Ycf48 (331 aa).

Residues 1–23 (MIPVIRSFLSLLLCVGLTFGLGG) form the signal peptide. Cysteine 24 is lipidated: N-palmitoyl cysteine. Cysteine 24 carries the S-diacylglycerol cysteine lipid modification.

It belongs to the Ycf48 family. As to quaternary structure, part of early PSII assembly complexes which includes D1 (psbA) and PsbI; not found in mature PSII. Binds to the lumenal side of PSII complexes. Interacts with YidC.

The protein localises to the cellular thylakoid membrane. In terms of biological role, a factor required for optimal assembly of photosystem II (PSII), acting in the early stages of PSII assembly. Also plays a role in replacement of photodamaged D1 (psbA). Assists YidC in synthesis of chlorophyll-binding proteins. In Synechococcus sp. (strain RCC307), this protein is Photosystem II assembly lipoprotein Ycf48.